Reading from the N-terminus, the 276-residue chain is Undecaprenyl-diphosphatase (276 aa).

Transmembrane regions (helical) follow at residues 43 to 63 (RAMAFNIIIQLAAILAVVWEF), 85 to 105 (GNLLLAFMPAVVLGVLFADLI), 109 to 129 (LFNPVTVAAALVVGGVIMLWA), 183 to 203 (AATEFSFFLAMPTMVGAAVYS), 214 to 234 (GDLPVFALGFVTSFIFAMIAV), and 249 to 269 (FAWYRIVFGLFILATWQFGWV).

It belongs to the UppP family.

The protein localises to the cell inner membrane. The catalysed reaction is di-trans,octa-cis-undecaprenyl diphosphate + H2O = di-trans,octa-cis-undecaprenyl phosphate + phosphate + H(+). Functionally, catalyzes the dephosphorylation of undecaprenyl diphosphate (UPP). Confers resistance to bacitracin. The polypeptide is Undecaprenyl-diphosphatase (Pseudomonas putida (strain ATCC 700007 / DSM 6899 / JCM 31910 / BCRC 17059 / LMG 24140 / F1)).